We begin with the raw amino-acid sequence, 366 residues long: Phospho-N-acetylmuramoyl-pentapeptide-transferase (366 aa).

10 helical membrane-spanning segments follow: residues A27 to L47, T71 to A91, L93 to F113, F138 to A158, L174 to G194, G205 to A225, L245 to P265, A268 to V288, I297 to F317, and Q343 to L363.

The protein belongs to the glycosyltransferase 4 family. MraY subfamily. Mg(2+) is required as a cofactor.

It localises to the cell inner membrane. The enzyme catalyses UDP-N-acetyl-alpha-D-muramoyl-L-alanyl-gamma-D-glutamyl-meso-2,6-diaminopimeloyl-D-alanyl-D-alanine + di-trans,octa-cis-undecaprenyl phosphate = di-trans,octa-cis-undecaprenyl diphospho-N-acetyl-alpha-D-muramoyl-L-alanyl-D-glutamyl-meso-2,6-diaminopimeloyl-D-alanyl-D-alanine + UMP. It participates in cell wall biogenesis; peptidoglycan biosynthesis. Its function is as follows. Catalyzes the initial step of the lipid cycle reactions in the biosynthesis of the cell wall peptidoglycan: transfers peptidoglycan precursor phospho-MurNAc-pentapeptide from UDP-MurNAc-pentapeptide onto the lipid carrier undecaprenyl phosphate, yielding undecaprenyl-pyrophosphoryl-MurNAc-pentapeptide, known as lipid I. This is Phospho-N-acetylmuramoyl-pentapeptide-transferase from Rhizobium meliloti (strain 1021) (Ensifer meliloti).